The sequence spans 493 residues: Sorting nexin-4 (493 aa).

A disordered region spans residues 1-67 (MDQDGFHSIA…KAGEAGDVGV (67 aa)). The segment covering 37 to 48 (SISPSSAQPPAS) has biased composition (low complexity). Positions 89–211 (WMDVQVREPA…DFLQSTEWSV (123 aa)) constitute a PX domain. The a 1,2-diacyl-sn-glycero-3-phospho-(1D-myo-inositol-3-phosphate) site is built by Arg-132, Lys-158, and Arg-177.

The protein belongs to the sorting nexin family.

Its subcellular location is the cytoplasm. The protein resides in the cytosol. It localises to the preautophagosomal structure membrane. The protein localises to the endosome membrane. In terms of biological role, sorting nexin, involved in the separation or division of vacuoles throughout the entire life cycle of the cells. Involved in retrieval of late-Golgi SNAREs from post-Golgi endosomes to the trans-Golgi network, for cytoplasm to vacuole transport (Cvt), and autophagy of large cargos including mitophagy, pexophagy and glycophagy. The chain is Sorting nexin-4 (SNX4) from Cryptococcus neoformans var. neoformans serotype D (strain B-3501A) (Filobasidiella neoformans).